Here is a 215-residue protein sequence, read N- to C-terminus: N-(5'-phosphoribosyl)anthranilate isomerase (215 aa).

Belongs to the TrpF family.

The catalysed reaction is N-(5-phospho-beta-D-ribosyl)anthranilate = 1-(2-carboxyphenylamino)-1-deoxy-D-ribulose 5-phosphate. Its pathway is amino-acid biosynthesis; L-tryptophan biosynthesis; L-tryptophan from chorismate: step 3/5. The chain is N-(5'-phosphoribosyl)anthranilate isomerase from Paramagnetospirillum magneticum (strain ATCC 700264 / AMB-1) (Magnetospirillum magneticum).